Here is a 123-residue protein sequence, read N- to C-terminus: Small ribosomal subunit protein uS12 (123 aa).

D89 is subject to 3-methylthioaspartic acid. Residues 101–123 (SLDTAGVKDRKQSRSKYGAKRPK) are disordered. Positions 113–123 (SRSKYGAKRPK) are enriched in basic residues.

The protein belongs to the universal ribosomal protein uS12 family. As to quaternary structure, part of the 30S ribosomal subunit. Contacts proteins S8 and S17. May interact with IF1 in the 30S initiation complex.

Its function is as follows. With S4 and S5 plays an important role in translational accuracy. In terms of biological role, interacts with and stabilizes bases of the 16S rRNA that are involved in tRNA selection in the A site and with the mRNA backbone. Located at the interface of the 30S and 50S subunits, it traverses the body of the 30S subunit contacting proteins on the other side and probably holding the rRNA structure together. The combined cluster of proteins S8, S12 and S17 appears to hold together the shoulder and platform of the 30S subunit. The polypeptide is Small ribosomal subunit protein uS12 (Laribacter hongkongensis (strain HLHK9)).